A 311-amino-acid polypeptide reads, in one-letter code: Ribosomal RNA small subunit methyltransferase H (311 aa).

Residues 33 to 35, aspartate 53, phenylalanine 80, aspartate 101, and glutamine 108 each bind S-adenosyl-L-methionine; that span reads AGH.

This sequence belongs to the methyltransferase superfamily. RsmH family.

The protein localises to the cytoplasm. It catalyses the reaction cytidine(1402) in 16S rRNA + S-adenosyl-L-methionine = N(4)-methylcytidine(1402) in 16S rRNA + S-adenosyl-L-homocysteine + H(+). Its function is as follows. Specifically methylates the N4 position of cytidine in position 1402 (C1402) of 16S rRNA. The sequence is that of Ribosomal RNA small subunit methyltransferase H from Clostridioides difficile (strain 630) (Peptoclostridium difficile).